The following is a 127-amino-acid chain: Fumarate reductase subunit C (127 aa).

Helical transmembrane passes span 30–50 (ATVLPLILFTLFLTFGLGSLV), 58–78 (GWLSFMANPIVVGINIVALLG), and 107–127 (IIVLTQWAAVAFISLIVLMVV).

The protein belongs to the FrdC family. In terms of assembly, part of an enzyme complex containing four subunits: a flavoprotein (FrdA), an iron-sulfur protein (FrdB), and two hydrophobic anchor proteins (FrdC and FrdD).

It is found in the cell inner membrane. Anchors the catalytic components of the fumarate reductase complex to the cell membrane, binds quinones. This chain is Fumarate reductase subunit C, found in Vibrio atlanticus (strain LGP32) (Vibrio splendidus (strain Mel32)).